The following is a 484-amino-acid chain: Replication factor C large subunit (484 aa).

46–53 serves as a coordination point for ATP; sequence GPPGSGKT. 3 stretches are compositionally biased toward basic and acidic residues: residues 419-432, 442-451, and 459-478; these read VKTE…KTKE, RISEPPEPLK, and KSVE…KKQA. The interval 419 to 484 is disordered; the sequence is VKTETPKKKE…KKQATLDSFF (66 aa).

The protein belongs to the activator 1 small subunits family. RfcL subfamily. As to quaternary structure, heteromultimer composed of small subunits (RfcS) and large subunits (RfcL).

Part of the RFC clamp loader complex which loads the PCNA sliding clamp onto DNA. The chain is Replication factor C large subunit from Methanococcus maripaludis (strain C5 / ATCC BAA-1333).